A 436-amino-acid chain; its full sequence is Repulsive guidance molecule B (436 aa).

The signal sequence occupies residues 1 to 48; sequence MGVRAAPSCAAAPAAAGAEQSRRPGLWPPSPPPPLLLLLLLSLGLLHA. Asn-123 is a glycosylation site (N-linked (GlcNAc...) asparagine). 2 disulfides stabilise this stretch: Cys-142-Cys-229 and Cys-166-Cys-315. Asn-386 carries an N-linked (GlcNAc...) asparagine glycan. Residue Cys-415 is the site of GPI-anchor amidated cysteine attachment. The propeptide at 416-436 is removed in mature form; sequence GGCRDLPVGLGLTCLILIMFL.

It belongs to the repulsive guidance molecule (RGM) family. Homooligomer. Interacts with DRGX. Interacts with BMP2 and BMP4. Interacts with the BMP type I receptors ACVR1, BMPR1A and BMPR1B and with the BMP type II receptor ACVR2B. The functional complex with its receptor NEO1/neogenin appears to be a heterotetramer with a 2:2 stoichiometry, RGM molecules acting as staples that bring two NEO1 receptors together without interacting themselves, this arrangement leads to activation of downstream signaling via RhoA. Post-translationally, GPI-anchored. In terms of processing, autocatalytically cleaved at low pH; the two chains remain linked via two disulfide bonds. Detected in neonatal and adult dorsal root ganglion sensory neurons, spinal cord, and brain (at protein level). Also expressed at high levels in retinal ganglion cells of developing mouse, extending to the optic nerve (at protein level). Expressed in testis, epididymis, ovary, uterus, and pituitary.

Its subcellular location is the cell membrane. It localises to the membrane raft. In terms of biological role, member of the repulsive guidance molecule (RGM) family that contributes to the patterning of the developing nervous system. Acts as a bone morphogenetic protein (BMP) coreceptor that potentiates BMP signaling. Promotes neuronal adhesion. May inhibit neurite outgrowth. The polypeptide is Repulsive guidance molecule B (Mus musculus (Mouse)).